The sequence spans 300 residues: UPF0761 membrane protein PSHAa0171 (300 aa).

6 helical membrane-spanning segments follow: residues 47-67, 100-120, 143-163, 181-201, 215-235, and 249-269; these read LLSLVPLIAVGVAIFSAFPGF, NANQMTAVGIGFLAAIALLLI, FAVYWMVLSLGPVFLGGSIAV, FSGFLLKLLPYGISMVGFIML, AIPGALFAAMLFELTKKGFAL, and AVATIPILFVWIYLSWIVVLL.

Belongs to the UPF0761 family.

The protein resides in the cell inner membrane. In Pseudoalteromonas translucida (strain TAC 125), this protein is UPF0761 membrane protein PSHAa0171.